A 330-amino-acid chain; its full sequence is Neurogenic differentiation factor 4 (330 aa).

Residues 1–79 (MTKTYTKAKE…RGPKKKKMTK (79 aa)) are disordered. Residues 25–35 (LSSKDELKAEN) are compositionally biased toward basic and acidic residues. A compositionally biased stretch (acidic residues) spans 52-64 (DSIEEEEEEEDDG). Over residues 67–79 (PKRRGPKKKKMTK) the composition is skewed to basic residues. Positions 73–79 (KKKKMTK) match the Nuclear localization signal motif. A bHLH domain is found at 87-139 (ARRVKANARERTRMHGLNDALDNLRRVMPCYSKTQKLSKIETLRLARNYIWAL). The tract at residues 162–183 (LSQPTSNLVAGCLQLGPQTLFL) is leucine-zipper.

Efficient DNA binding requires dimerization with another bHLH protein. In terms of processing, serine or threonine phosphorylation within the basic region may regulate neurogenic activity. In terms of tissue distribution, expressed in both the developing central nervous system and peripheral nervous system.

Its subcellular location is the nucleus. In terms of biological role, probably acts as a transcriptional activator. Mediates neuronal differentiation. Required for the regulation of amacrine cell fate specification in the retina. This is Neurogenic differentiation factor 4 (NEUROD4) from Gallus gallus (Chicken).